The primary structure comprises 196 residues: Ribose 1,5-bisphosphate phosphokinase PhnN (196 aa).

The protein belongs to the ribose 1,5-bisphosphokinase family.

The catalysed reaction is alpha-D-ribose 1,5-bisphosphate + ATP = 5-phospho-alpha-D-ribose 1-diphosphate + ADP. The protein operates within metabolic intermediate biosynthesis; 5-phospho-alpha-D-ribose 1-diphosphate biosynthesis; 5-phospho-alpha-D-ribose 1-diphosphate from D-ribose 5-phosphate (route II): step 3/3. Functionally, catalyzes the phosphorylation of ribose 1,5-bisphosphate to 5-phospho-D-ribosyl alpha-1-diphosphate (PRPP). The polypeptide is Ribose 1,5-bisphosphate phosphokinase PhnN (Psychromonas ingrahamii (strain DSM 17664 / CCUG 51855 / 37)).